The sequence spans 371 residues: Cytochrome b (371 aa).

The next 4 helical transmembrane spans lie at 25-45, 69-90, 105-125, and 170-190; these read FGSM…FLAI, WIMQ…YIHI, WLSG…GYVL, and FFAL…IHII. The heme b site is built by His-75 and His-89. Heme b-binding residues include His-174 and His-188. His-193 is a binding site for a ubiquinone. 4 consecutive transmembrane segments (helical) span residues 218 to 238, 280 to 300, 312 to 332, and 339 to 358; these read YKDT…LSFS, LGGT…PFTH, LAQM…WTAS, and FIII…IMNP.

It belongs to the cytochrome b family. As to quaternary structure, the cytochrome bc1 complex contains 3 respiratory subunits (MT-CYB, CYC1 and UQCRFS1), 2 core proteins (UQCRC1 and UQCRC2) and probably 6 low-molecular weight proteins. Heme b is required as a cofactor.

It is found in the mitochondrion inner membrane. Component of the ubiquinol-cytochrome c reductase complex (complex III or cytochrome b-c1 complex) that is part of the mitochondrial respiratory chain. The b-c1 complex mediates electron transfer from ubiquinol to cytochrome c. Contributes to the generation of a proton gradient across the mitochondrial membrane that is then used for ATP synthesis. This chain is Cytochrome b (MT-CYB), found in Sinomicrurus kelloggi (Kellogg's coral snake).